Here is a 326-residue protein sequence, read N- to C-terminus: Beta-ketoacyl-[acyl-carrier-protein] synthase III (326 aa).

Active-site residues include Cys115 and His253. Residues 254-258 (QANKR) are ACP-binding. Residue Asn283 is part of the active site.

Belongs to the thiolase-like superfamily. FabH family. As to quaternary structure, homodimer.

It is found in the cytoplasm. The enzyme catalyses malonyl-[ACP] + acetyl-CoA + H(+) = 3-oxobutanoyl-[ACP] + CO2 + CoA. The protein operates within lipid metabolism; fatty acid biosynthesis. Functionally, catalyzes the condensation reaction of fatty acid synthesis by the addition to an acyl acceptor of two carbons from malonyl-ACP. Catalyzes the first condensation reaction which initiates fatty acid synthesis and may therefore play a role in governing the total rate of fatty acid production. Possesses both acetoacetyl-ACP synthase and acetyl transacylase activities. Its substrate specificity determines the biosynthesis of branched-chain and/or straight-chain of fatty acids. The protein is Beta-ketoacyl-[acyl-carrier-protein] synthase III of Bradyrhizobium diazoefficiens (strain JCM 10833 / BCRC 13528 / IAM 13628 / NBRC 14792 / USDA 110).